The primary structure comprises 105 residues: Small ribosomal subunit protein uS10 (105 aa).

It belongs to the universal ribosomal protein uS10 family. As to quaternary structure, part of the 30S ribosomal subunit.

Functionally, involved in the binding of tRNA to the ribosomes. This chain is Small ribosomal subunit protein uS10, found in Acaryochloris marina (strain MBIC 11017).